The sequence spans 556 residues: 2-isopropylmalate synthase (556 aa).

The Pyruvate carboxyltransferase domain maps to 33–307 (PIWCSSDLRD…NPGLDFSDID (275 aa)). Residues Asp-42, His-246, His-248, and Asn-282 each coordinate Mg(2+). Residues 439-556 (ANVPYALISH…SLSQTQAKAA (118 aa)) are regulatory domain.

It belongs to the alpha-IPM synthase/homocitrate synthase family. LeuA type 2 subfamily. In terms of assembly, homodimer. Mg(2+) serves as cofactor.

Its subcellular location is the cytoplasm. It catalyses the reaction 3-methyl-2-oxobutanoate + acetyl-CoA + H2O = (2S)-2-isopropylmalate + CoA + H(+). It participates in amino-acid biosynthesis; L-leucine biosynthesis; L-leucine from 3-methyl-2-oxobutanoate: step 1/4. Functionally, catalyzes the condensation of the acetyl group of acetyl-CoA with 3-methyl-2-oxobutanoate (2-ketoisovalerate) to form 3-carboxy-3-hydroxy-4-methylpentanoate (2-isopropylmalate). This Pseudomonas syringae pv. syringae (strain B728a) protein is 2-isopropylmalate synthase.